The following is a 345-amino-acid chain: 3-isopropylmalate dehydrogenase (345 aa).

Substrate-binding residues include arginine 94, arginine 104, arginine 130, and aspartate 215. Positions 215, 239, and 243 each coordinate Mg(2+). 273–285 (GSAPDIAGKGIAN) is an NAD(+) binding site.

Belongs to the isocitrate and isopropylmalate dehydrogenases family. LeuB type 1 subfamily. In terms of assembly, homodimer. The cofactor is Mg(2+). Requires Mn(2+) as cofactor.

It localises to the cytoplasm. The catalysed reaction is (2R,3S)-3-isopropylmalate + NAD(+) = 4-methyl-2-oxopentanoate + CO2 + NADH. It functions in the pathway amino-acid biosynthesis; L-leucine biosynthesis; L-leucine from 3-methyl-2-oxobutanoate: step 3/4. Functionally, catalyzes the oxidation of 3-carboxy-2-hydroxy-4-methylpentanoate (3-isopropylmalate) to 3-carboxy-4-methyl-2-oxopentanoate. The product decarboxylates to 4-methyl-2 oxopentanoate. This Lactococcus lactis subsp. lactis (strain IL1403) (Streptococcus lactis) protein is 3-isopropylmalate dehydrogenase (leuB).